A 67-amino-acid chain; its full sequence is Cell division protein ZapB (67 aa).

A coiled-coil region spans residues 3-59; sequence LELLSKLETKIQAALETIELLKMELEEEKQTSSSLSEQNQQLQQELTSWNEKVTGLV.

Belongs to the ZapB family. As to quaternary structure, homodimer. The ends of the coiled-coil dimer bind to each other, forming polymers. Interacts with FtsZ.

It is found in the cytoplasm. Its function is as follows. Non-essential, abundant cell division factor that is required for proper Z-ring formation. It is recruited early to the divisome by direct interaction with FtsZ, stimulating Z-ring assembly and thereby promoting cell division earlier in the cell cycle. Its recruitment to the Z-ring requires functional FtsA or ZipA. This is Cell division protein ZapB from Shewanella halifaxensis (strain HAW-EB4).